A 59-amino-acid polypeptide reads, in one-letter code: Large ribosomal subunit protein bL32 (59 aa).

The span at 1 to 16 shows a compositional bias: basic residues; sequence MAVPKRKTSPSKRGMR. Residues 1–41 form a disordered region; that stretch reads MAVPKRKTSPSKRGMRRSADALKAPTYIEDKNSGELRRPHH. Positions 28–41 are enriched in basic and acidic residues; that stretch reads IEDKNSGELRRPHH.

This sequence belongs to the bacterial ribosomal protein bL32 family.

The sequence is that of Large ribosomal subunit protein bL32 from Bartonella henselae (strain ATCC 49882 / DSM 28221 / CCUG 30454 / Houston 1) (Rochalimaea henselae).